The primary structure comprises 799 residues: Dipeptidyl peptidase family member 1 (799 aa).

Topologically, residues 1-31 (MTAEADLLEGYDEELGGNESQKRDCKGITTA) are cytoplasmic. A helical; Signal-anchor for type II membrane protein membrane pass occupies residues 32–52 (IVVVLLILVMIFAALVFFTPL). Residues 53 to 799 (FAAKSFGSWR…FLRQCFYTDK (747 aa)) are Lumenal-facing. N-linked (GlcNAc...) asparagine glycosylation is found at N64, N138, N267, and N335. A disulfide bridge links C474 with C477. N481 carries an N-linked (GlcNAc...) asparagine glycan. C482 and C500 form a disulfide bridge. N512 carries N-linked (GlcNAc...) asparagine glycosylation. Catalysis depends on charge relay system residues S669, D742, and H774. The cysteines at positions 689 and 794 are disulfide-linked.

Belongs to the peptidase S9B family. DPPIV subfamily.

It localises to the cell membrane. Its function is as follows. Removes N-terminal dipeptides sequentially from polypeptides. Essential for control of distal tip cell migration. The sequence is that of Dipeptidyl peptidase family member 1 (dpf-1) from Caenorhabditis elegans.